The primary structure comprises 224 residues: F420-dependent NADP reductase (224 aa).

Residues 9-12 (TGDQ), 31-32 (SR), Lys36, Val74, Val100, and Ala145 each bind NADP(+).

This sequence belongs to the F420-dependent NADP reductase family. Homotetramer.

It catalyses the reaction reduced coenzyme F420-(gamma-L-Glu)(n) + NADP(+) = oxidized coenzyme F420-(gamma-L-Glu)(n) + NADPH + 2 H(+). Functionally, catalyzes the reduction of NADP(+) with F420H(2) via hydride transfer, and the reverse reaction, i.e. the reduction of F420 with NADPH. Probably functions in the regeneration of NADPH required in biosynthetic reactions. This Methanothermobacter marburgensis (strain ATCC BAA-927 / DSM 2133 / JCM 14651 / NBRC 100331 / OCM 82 / Marburg) (Methanobacterium thermoautotrophicum) protein is F420-dependent NADP reductase.